A 236-amino-acid polypeptide reads, in one-letter code: Biosynthetic peptidoglycan transglycosylase (236 aa).

The chain crosses the membrane as a helical span at residues leucine 20–leucine 40.

This sequence belongs to the glycosyltransferase 51 family.

The protein localises to the cell inner membrane. The catalysed reaction is [GlcNAc-(1-&gt;4)-Mur2Ac(oyl-L-Ala-gamma-D-Glu-L-Lys-D-Ala-D-Ala)](n)-di-trans,octa-cis-undecaprenyl diphosphate + beta-D-GlcNAc-(1-&gt;4)-Mur2Ac(oyl-L-Ala-gamma-D-Glu-L-Lys-D-Ala-D-Ala)-di-trans,octa-cis-undecaprenyl diphosphate = [GlcNAc-(1-&gt;4)-Mur2Ac(oyl-L-Ala-gamma-D-Glu-L-Lys-D-Ala-D-Ala)](n+1)-di-trans,octa-cis-undecaprenyl diphosphate + di-trans,octa-cis-undecaprenyl diphosphate + H(+). The protein operates within cell wall biogenesis; peptidoglycan biosynthesis. Functionally, peptidoglycan polymerase that catalyzes glycan chain elongation from lipid-linked precursors. The protein is Biosynthetic peptidoglycan transglycosylase of Rhizobium meliloti (strain 1021) (Ensifer meliloti).